A 288-amino-acid chain; its full sequence is Probable endonuclease 4 (288 aa).

Residues histidine 75, histidine 115, glutamate 153, aspartate 187, histidine 190, histidine 224, aspartate 237, histidine 239, and glutamate 269 each coordinate Zn(2+).

It belongs to the AP endonuclease 2 family. It depends on Zn(2+) as a cofactor.

The catalysed reaction is Endonucleolytic cleavage to 5'-phosphooligonucleotide end-products.. Functionally, endonuclease IV plays a role in DNA repair. It cleaves phosphodiester bonds at apurinic or apyrimidinic (AP) sites, generating a 3'-hydroxyl group and a 5'-terminal sugar phosphate. In Chlamydia trachomatis serovar A (strain ATCC VR-571B / DSM 19440 / HAR-13), this protein is Probable endonuclease 4.